Reading from the N-terminus, the 113-residue chain is Prostate and testis expressed protein 2 (113 aa).

An N-terminal signal peptide occupies residues 1-26; sequence MLVLFLLGTVFLLCPYWGELHDPIKA. The UPAR/Ly6 domain occupies 29 to 110; the sequence is IMCYECKKYH…CDHSNYCNLP (82 aa). 4 cysteine pairs are disulfide-bonded: Cys-31/Cys-57, Cys-34/Cys-42, Cys-49/Cys-80, and Cys-84/Cys-101.

It belongs to the PATE family. As to expression, isoform 1 and isoform 2 are expressed in prostate and testis. Isoform 2 is expressed in male and female brain at equivalent levels, in particular in cerebellum, cerebral cortex, corpus callosum, occipital, parrietal and temporal lobes, and pons, but not in amygdala, cerebral peduncle, hippocampus and thalamus.

The protein localises to the secreted. This Homo sapiens (Human) protein is Prostate and testis expressed protein 2 (PATE2).